A 157-amino-acid chain; its full sequence is Deoxyuridine 5'-triphosphate nucleotidohydrolase (157 aa).

Residues 76 to 78, N89, 93 to 95, and K103 contribute to the substrate site; these read RSG and TID.

It belongs to the dUTPase family. It depends on Mg(2+) as a cofactor.

It catalyses the reaction dUTP + H2O = dUMP + diphosphate + H(+). Its pathway is pyrimidine metabolism; dUMP biosynthesis; dUMP from dCTP (dUTP route): step 2/2. Its function is as follows. This enzyme is involved in nucleotide metabolism: it produces dUMP, the immediate precursor of thymidine nucleotides and it decreases the intracellular concentration of dUTP so that uracil cannot be incorporated into DNA. The sequence is that of Deoxyuridine 5'-triphosphate nucleotidohydrolase from Brucella abortus (strain 2308).